Reading from the N-terminus, the 353-residue chain is uncharacterized protein (353 aa).

The next 9 helical transmembrane spans lie at 16–36 (AAYI…ISCG), 77–97 (VVLA…FQGL), 106–128 (YTLG…GLHL), 140–160 (SVAA…LVHA), 167–187 (LILT…LIIA), 208–228 (GWSY…LLII), 263–283 (LLTG…LVIP), 296–316 (HLLP…DLLS), and 323–343 (IELP…ALIL).

It belongs to the binding-protein-dependent transport system permease family. FecCD subfamily. As to quaternary structure, the complex is composed of two ATP-binding proteins (YvrA), two transmembrane proteins (YvrB) and a solute-binding protein (YvrC).

It localises to the cell membrane. Functionally, probably part of an ABC transporter complex. Probably responsible for the translocation of the substrate across the membrane. This is an uncharacterized protein from Bacillus subtilis (strain 168).